Here is a 37-residue protein sequence, read N- to C-terminus: Large ribosomal subunit protein bL36 (37 aa).

This sequence belongs to the bacterial ribosomal protein bL36 family.

The sequence is that of Large ribosomal subunit protein bL36 from Bacillus anthracis (strain A0248).